A 225-amino-acid chain; its full sequence is Protein-L-isoaspartate O-methyltransferase 2 (225 aa).

Residue serine 73 is part of the active site.

This sequence belongs to the methyltransferase superfamily. L-isoaspartyl/D-aspartyl protein methyltransferase family.

It localises to the cytoplasm. The catalysed reaction is [protein]-L-isoaspartate + S-adenosyl-L-methionine = [protein]-L-isoaspartate alpha-methyl ester + S-adenosyl-L-homocysteine. Its function is as follows. Catalyzes the methyl esterification of L-isoaspartyl residues in peptides and proteins that result from spontaneous decomposition of normal L-aspartyl and L-asparaginyl residues. It plays a role in the repair and/or degradation of damaged proteins. This is Protein-L-isoaspartate O-methyltransferase 2 from Pelobacter propionicus (strain DSM 2379 / NBRC 103807 / OttBd1).